The primary structure comprises 220 residues: Large ribosomal subunit protein bL25 (220 aa).

The segment covering 186 to 199 (ELEDEDEDEDEVAA) has biased composition (acidic residues). The tract at residues 186–220 (ELEDEDEDEDEVAADEVPATEVDDQAAVKEGEGKE) is disordered. Residues 211–220 (AAVKEGEGKE) show a composition bias toward basic and acidic residues.

This sequence belongs to the bacterial ribosomal protein bL25 family. CTC subfamily. In terms of assembly, part of the 50S ribosomal subunit; part of the 5S rRNA/L5/L18/L25 subcomplex. Contacts the 5S rRNA. Binds to the 5S rRNA independently of L5 and L18.

This is one of the proteins that binds to the 5S RNA in the ribosome where it forms part of the central protuberance. The chain is Large ribosomal subunit protein bL25 from Christiangramia forsetii (strain DSM 17595 / CGMCC 1.15422 / KT0803) (Gramella forsetii).